The following is a 496-amino-acid chain: Probable G-protein coupled receptor Mth-like 5 (496 aa).

Over 1 to 219 (MLVKTLGAHF…SNFLLRKILN (219 aa)) the chain is Extracellular. N-linked (GlcNAc...) asparagine glycosylation occurs at N82. A helical membrane pass occupies residues 220–240 (PIFHGISLVILLVIAIIYFIL). Topologically, residues 241–246 (PTLRDL) are cytoplasmic. The helical transmembrane segment at 247 to 267 (VGNIVTTIAMCLMVSQAADLV) threads the bilayer. Over 268–276 (RIFTELTSH) the chain is Extracellular. Residues 277–297 (VSFIVADIILCFSLLAAFFWL) traverse the membrane as a helical segment. Residues 298-327 (NSFGFYIWKTFRSRNVFLRVTDGRKYCYYS) are Cytoplasmic-facing. Residues 328–348 (AYAWGCTATMAALAVFAHFFL) form a helical membrane-spanning segment. The Extracellular portion of the chain corresponds to 349–366 (DAESYKQEHMVGEQETIG). The helical transmembrane segment at 367–387 (WLGICIFFAPIACTILVNIFF) threads the bilayer. Topologically, residues 388–411 (YVTTRKLINRRTVYGRIAHKLKAN) are cytoplasmic. A helical transmembrane segment spans residues 412-432 (FIMFSLMLLVMSIAWLFLIMS). Topologically, residues 433–438 (WLQMEG) are extracellular. Residues 439–459 (LLYAHIVVNALQTPLLLYICV) traverse the membrane as a helical segment. Over 460–496 (LRQRHVTFLLKKTCCYNEPPSANDWGDELHYMNGNDY) the chain is Cytoplasmic.

It belongs to the G-protein coupled receptor 2 family. Mth subfamily.

Its subcellular location is the cell membrane. The sequence is that of Probable G-protein coupled receptor Mth-like 5 (mthl5) from Drosophila melanogaster (Fruit fly).